The chain runs to 134 residues: MNRRLSRLRAVQALYQMDVIDTSMEKAIESVLDEGEEASSFMSDLVSGTVTHQEELDRLYADHLQGWTVDRIGNVDRAILRMALYELYYVDDIPKNVSFNEAIELAKAFGGEDAGRFINGVLSKTMEAYKPKDK.

Belongs to the NusB family.

Involved in transcription antitermination. Required for transcription of ribosomal RNA (rRNA) genes. Binds specifically to the boxA antiterminator sequence of the ribosomal RNA (rrn) operons. This chain is Transcription antitermination protein NusB, found in Halalkalibacterium halodurans (strain ATCC BAA-125 / DSM 18197 / FERM 7344 / JCM 9153 / C-125) (Bacillus halodurans).